The primary structure comprises 216 residues: Imidazoleglycerol-phosphate dehydratase (216 aa).

It belongs to the imidazoleglycerol-phosphate dehydratase family.

It is found in the cytoplasm. It catalyses the reaction D-erythro-1-(imidazol-4-yl)glycerol 3-phosphate = 3-(imidazol-4-yl)-2-oxopropyl phosphate + H2O. The protein operates within amino-acid biosynthesis; L-histidine biosynthesis; L-histidine from 5-phospho-alpha-D-ribose 1-diphosphate: step 6/9. The polypeptide is Imidazoleglycerol-phosphate dehydratase (Nocardia farcinica (strain IFM 10152)).